Consider the following 245-residue polypeptide: MSDNERTIVVRVLKFDPQSAVNKPHFKEYQLKETPSMTLFIALNLIREHQDPDLSFDFVCRAGICGSCAMMVNGRPRLACKTLTSSFENGVITLMPMPSFTLIKDLSVNTGDWFSDMTKRVESWAHSKEEVDITKPEKRVEPDEAQEVFELDRCIECGCCIASCGTKLMRPNFIGAAGMNRAMRFMIDSHDERSDDDFYELVGDDDGVFGCMSLIACHDTCPKELPLQSSIATLRNRMLKVGKSR.

The region spanning 17-98 (PQSAVNKPHF…NGVITLMPMP (82 aa)) is the 2Fe-2S ferredoxin-type domain. The [2Fe-2S] cluster site is built by C60, C65, C68, and C80. Positions 145–174 (AQEVFELDRCIECGCCIASCGTKLMRPNFI) constitute a 4Fe-4S ferredoxin-type domain. Positions 154, 157, and 160 each coordinate [4Fe-4S] cluster. 3 residues coordinate [3Fe-4S] cluster: C164, C211, and C217. [4Fe-4S] cluster is bound at residue C221.

Belongs to the succinate dehydrogenase/fumarate reductase iron-sulfur protein family. As to quaternary structure, part of an enzyme complex containing three subunits: a flavoprotein (frdA), an iron-sulfur protein (frdB), and diheme cytochrome b (frdC). The cofactor is [2Fe-2S] cluster. [3Fe-4S] cluster serves as cofactor. [4Fe-4S] cluster is required as a cofactor.

It catalyses the reaction a menaquinone + succinate = a menaquinol + fumarate. This chain is Fumarate reductase iron-sulfur subunit (frdB), found in Helicobacter pylori (strain J99 / ATCC 700824) (Campylobacter pylori J99).